The following is a 124-amino-acid chain: Large ribosomal subunit protein bL12 (124 aa).

This sequence belongs to the bacterial ribosomal protein bL12 family. Homodimer. Part of the ribosomal stalk of the 50S ribosomal subunit. Forms a multimeric L10(L12)X complex, where L10 forms an elongated spine to which 2 to 4 L12 dimers bind in a sequential fashion. Binds GTP-bound translation factors.

Functionally, forms part of the ribosomal stalk which helps the ribosome interact with GTP-bound translation factors. Is thus essential for accurate translation. This is Large ribosomal subunit protein bL12 from Akkermansia muciniphila (strain ATCC BAA-835 / DSM 22959 / JCM 33894 / BCRC 81048 / CCUG 64013 / CIP 107961 / Muc).